Here is a 218-residue protein sequence, read N- to C-terminus: MAQTAMSETYDFLFKFLVIGNAGTGKSCLLHQFIEKKFKDDSNHTIGVEFGSKIINVGGKYVKLQIWDTAGQERFRSVTRSYYRGAAGALLVYDITSRETYNALTNWLTDARMLASQNIVIILCGNKKDLDADREVTFLEASRFAQENELMFLETSALTGENVEEAFMQCARKILNKIESGELDPERMGSGIQYGDAALRQLRSPRRTQAPSAQECGC.

9 residues coordinate GTP: glycine 23, threonine 24, glycine 25, lysine 26, serine 27, cysteine 28, serine 42, histidine 44, and threonine 45. Serine 27 serves as a coordination point for Mg(2+). The short motif at 44-49 (HTIGVE) is the Switch 1 element. Positions 45 and 68 each coordinate Mg(2+). Residues 70 to 79 (AGQERFRSVT) carry the Switch 2 motif. Glycine 71 is a GTP binding site. Residue glutamine 72 is modified to 5-glutamyl serotonin. Asparagine 126, lysine 127, aspartate 129, alanine 157, and leucine 158 together coordinate GTP. Serine 190 carries the phosphoserine modification. Phosphoserine; by CDK1 is present on serine 204. S-geranylgeranyl cysteine attachment occurs at residues cysteine 216 and cysteine 218. Position 218 is a cysteine methyl ester (cysteine 218).

Belongs to the small GTPase superfamily. Rab family. As to quaternary structure, interacts with SGSM1, SGSM2 and SGSM3. Interacts with RAB11FIP1, RABEP1, ZFYVE20 and RUFY1. Interacts (membrane-bound form) with NDRG1; the interaction involves NDRG1 in vesicular recycling of E-cadherin. Interacts (in GTP-bound form) with GRIPAP1 (via N-terminus). Interacts with RABEP1 and RBSN. Does not interact with HPS4. Interacts with RABEP2; this interaction may mediate VEGFR2 cell surface expression. Mg(2+) serves as cofactor. Post-translationally, serotonylation of Gln-72 by TGM2 during activation and aggregation of platelets leads to constitutive activation of GTPase activity. In terms of processing, phosphorylated by CDK1 kinase during mitosis.

Its subcellular location is the membrane. It is found in the cytoplasm. The protein resides in the early endosome membrane. The protein localises to the recycling endosome membrane. The enzyme catalyses GTP + H2O = GDP + phosphate + H(+). Its activity is regulated as follows. Regulated by guanine nucleotide exchange factors (GEFs) which promote the exchange of bound GDP for free GTP. Regulated by GTPase activating proteins (GAPs) which increase the GTP hydrolysis activity. Inhibited by GDP dissociation inhibitors (GDIs). The small GTPases Rab are key regulators of intracellular membrane trafficking, from the formation of transport vesicles to their fusion with membranes. Rabs cycle between an inactive GDP-bound form and an active GTP-bound form that is able to recruit to membranes different sets of downstream effectors directly responsible for vesicle formation, movement, tethering and fusion. RAB4A is involved in protein transport. Also plays a role in vesicular traffic. Mediates VEGFR2 endosomal trafficking to enhance VEGFR2 signaling. Acts as a regulator of platelet alpha-granule release during activation and aggregation of platelets. The protein is Ras-related protein Rab-4A of Rattus norvegicus (Rat).